A 474-amino-acid chain; its full sequence is Ribulose bisphosphate carboxylase large chain (474 aa).

An N6,N6,N6-trimethyllysine modification is found at Lys13. The substrate site is built by Asn122 and Thr172. Residue Lys174 is the Proton acceptor of the active site. Lys176 contacts substrate. Residues Lys200, Asp202, and Glu203 each contribute to the Mg(2+) site. An N6-carboxylysine modification is found at Lys200. His293 (proton acceptor) is an active-site residue. The substrate site is built by Arg294, His326, and Ser378.

It belongs to the RuBisCO large chain family. Type I subfamily. As to quaternary structure, heterohexadecamer of 8 large chains and 8 small chains; disulfide-linked. The disulfide link is formed within the large subunit homodimers. Mg(2+) is required as a cofactor. The disulfide bond which can form in the large chain dimeric partners within the hexadecamer appears to be associated with oxidative stress and protein turnover.

It localises to the plastid. The protein resides in the chloroplast. The enzyme catalyses 2 (2R)-3-phosphoglycerate + 2 H(+) = D-ribulose 1,5-bisphosphate + CO2 + H2O. It carries out the reaction D-ribulose 1,5-bisphosphate + O2 = 2-phosphoglycolate + (2R)-3-phosphoglycerate + 2 H(+). RuBisCO catalyzes two reactions: the carboxylation of D-ribulose 1,5-bisphosphate, the primary event in carbon dioxide fixation, as well as the oxidative fragmentation of the pentose substrate in the photorespiration process. Both reactions occur simultaneously and in competition at the same active site. This is Ribulose bisphosphate carboxylase large chain from Dendrophthora clavata (Columbian mistletoe).